Consider the following 848-residue polypeptide: Xylosyltransferase (848 aa).

Over 1–14 the chain is Cytoplasmic; that stretch reads MSLHRTLRRFLRKW. The helical; Signal-anchor for type II membrane protein transmembrane segment at 15 to 35 threads the bilayer; the sequence is KALVYAVSFILLIQAFFTFQS. Residues 36–843 lie on the Lumenal side of the membrane; that stretch reads SPNLMEEEHL…PKTELISVKP (808 aa). Disulfide bonds link cysteine 145–cysteine 173, cysteine 189–cysteine 427, cysteine 446–cysteine 459, and cysteine 448–cysteine 457. UDP-alpha-D-xylose-binding positions include valine 219, aspartate 247, and 276-278; that span reads TIW. Asparagine 306 carries N-linked (GlcNAc...) asparagine glycosylation. 379 to 380 is a UDP-alpha-D-xylose binding site; it reads DW. UDP-alpha-D-xylose contacts are provided by residues serine 460 and 482-483; that span reads RK. Intrachain disulfides connect cysteine 529–cysteine 811 and cysteine 794–cysteine 822. Asparagine 530 carries an N-linked (GlcNAc...) asparagine glycan. Residues 824–848 form a disordered region; it reads NTNWSSLSPDPKTELISVKPDGRIR. N-linked (GlcNAc...) asparagine glycosylation is present at asparagine 826.

It belongs to the glycosyltransferase 14 family. XylT subfamily. A divalent metal cation is required as a cofactor.

It localises to the endoplasmic reticulum membrane. It is found in the golgi apparatus membrane. It carries out the reaction UDP-alpha-D-xylose + L-seryl-[protein] = 3-O-(beta-D-xylosyl)-L-seryl-[protein] + UDP + H(+). It participates in glycan metabolism; chondroitin sulfate biosynthesis. Its pathway is glycan metabolism; heparan sulfate biosynthesis. Catalyzes the first step in biosynthesis of glycosaminoglycan. Transfers D-xylose from UDP-D-xylose to specific serine residues of the core protein. Initial enzyme in the biosynthesis of chondroitin sulfate and dermatan sulfate proteoglycans in fibroblasts and chondrocytes. The polypeptide is Xylosyltransferase (xt) (Ciona intestinalis (Transparent sea squirt)).